A 238-amino-acid polypeptide reads, in one-letter code: Ribonuclease PH (238 aa).

Residues Arg-86 and Gly-124–Arg-126 each bind phosphate.

The protein belongs to the RNase PH family. As to quaternary structure, homohexameric ring arranged as a trimer of dimers.

The enzyme catalyses tRNA(n+1) + phosphate = tRNA(n) + a ribonucleoside 5'-diphosphate. Phosphorolytic 3'-5' exoribonuclease that plays an important role in tRNA 3'-end maturation. Removes nucleotide residues following the 3'-CCA terminus of tRNAs; can also add nucleotides to the ends of RNA molecules by using nucleoside diphosphates as substrates, but this may not be physiologically important. Probably plays a role in initiation of 16S rRNA degradation (leading to ribosome degradation) during starvation. This is Ribonuclease PH from Maricaulis maris (strain MCS10) (Caulobacter maris).